We begin with the raw amino-acid sequence, 1961 residues long: Ankyrin-3 (1961 aa).

Positions 1–10 are enriched in basic and acidic residues; the sequence is MSEEPKEKPA. The disordered stretch occupies residues 1-25; that stretch reads MSEEPKEKPAKPAHRKRKGKKSDAN. The span at 11 to 20 shows a compositional bias: basic residues; it reads KPAHRKRKGK. Ser-22 is modified (phosphoserine). ANK repeat units follow at residues 56 to 85, 89 to 118, 122 to 151, 155 to 184, 186 to 213, 217 to 246, 250 to 279, 283 to 312, 316 to 345, 349 to 378, 382 to 411, 415 to 444, 448 to 477, 481 to 510, 514 to 543, 547 to 576, 580 to 609, 613 to 642, 646 to 675, 679 to 708, 712 to 741, 745 to 774, and 778 to 807; these read NGLN…NVDA, KGNT…NVNA, NGFT…SQSL, DGFT…KGKV, LPAL…NADV, SGFT…AVDF, NDIT…KIDA, DGLT…PILS, NGLS…PVDD, DYLT…SPNA, NGFT…SIQA, SGLT…SPNT, RGET…QVEA, DDQT…SPNA, SGYT…SLSI, KGFT…SPDA, SGLT…SPHA, NGYT…DANA, QGIA…NVNL, SGLT…HVDA, MGYT…KVNA, NGYT…SPNE, and NGNT…EIMT. Ser-606 is subject to Phosphoserine. The residue at position 732 (Leu-732) is a Phosphoserine. Phosphoserine occurs at positions 830, 844, 850, 873, 914, 917, 923, 958, 960, and 1114. ZU5 domains follow at residues 985-1140 and 1142-1289; these read FLVS…VVSR and KQES…LADC. The UPA domain stretch occupies residues 1274–1408; that stretch reads VSFTTNVSAR…SIKIRDTSQE (135 aa). Residues Ser-1451, Ser-1462, Ser-1470, Ser-1473, and Gly-1560 each carry the phosphoserine modification. The Death domain maps to 1478 to 1562; that stretch reads TDIRMAIVAD…DIVTLLEGPI (85 aa). 5 disordered regions span residues 1606 to 1678, 1698 to 1740, 1784 to 1818, 1844 to 1884, and 1915 to 1961; these read PNPF…DPLD, SVPG…VTED, WQNE…DQAR, PEAK…PVSP, and MTRT…KKTH. A compositionally biased stretch (basic and acidic residues) spans 1725 to 1740; the sequence is QQEKGKSGPDEEVTED. The segment covering 1784 to 1795 has biased composition (polar residues); sequence WQNETPSGSLES. Phosphoserine is present on residues Ser-1795, Ser-1813, and Ser-1883. The segment covering 1808-1818 has biased composition (basic and acidic residues); that stretch reads DRLDDSSDQAR. A compositionally biased stretch (basic and acidic residues) spans 1933-1961; it reads GSTRSEPKQGEGYKVKTKKEIRNVEKKTH.

May be a constituent of a NFASC/NRCAM/ankyrin G complex. Interacts with RHBG. Directly interacts with DMD and betaDAG1; this interaction does not interfere with DMD-binding and is required for DMD and betaDAG1 retention at costameres. Interacts (via N-terminal ANK repeats) with SCHIP1 isoform 7 (via C-terminus); this interaction is required for the localization at axon initial segments (AISs) and nodes of Ranvier (NRs). Interacts with PLEC and FLNC. Interacts with KCNA1; this inhibits channel activity. Interacts with SCN5A. Interacts with PKP2 and GJA1/CX43. Expressed in many epithelial tissues, muscles and axons. Expressed in kidney, brain, skin, lung, liver, intestine, pancreas, heart and testis (at protein level). In testis, expressed in Leydig cells, but very weakly or not at all in Sertoli cells or seminiferous tubules. Expressed in macrophages (at protein level).

It is found in the cytoplasm. Its subcellular location is the cytoskeleton. The protein resides in the cell projection. The protein localises to the axon. It localises to the cell membrane. It is found in the sarcolemma. Its subcellular location is the postsynaptic cell membrane. The protein resides in the lysosome. The protein localises to the T-tubule. Membrane-cytoskeleton linker. May participate in the maintenance/targeting of ion channels and cell adhesion molecules at the nodes of Ranvier and axonal initial segments. In skeletal muscle, required for costamere localization of DMD and betaDAG1. Regulates KCNA1 channel activity in function of dietary Mg(2+) levels, and thereby contributes to the regulation of renal Mg(2+) reabsorption. Required for intracellular adhesion and junctional conductance in myocytes, potentially via stabilization of GJA1/CX43 protein abundance and promotion of PKP2, GJA1/CX43, and SCN5A/Nav1.5 localization to cell-cell junctions. The protein is Ankyrin-3 (Ank3) of Mus musculus (Mouse).